A 265-amino-acid chain; its full sequence is 5'-nucleotidase SurE (265 aa).

A divalent metal cation-binding residues include D8, D9, S39, and N96.

The protein belongs to the SurE nucleotidase family. A divalent metal cation is required as a cofactor.

The protein localises to the cytoplasm. The enzyme catalyses a ribonucleoside 5'-phosphate + H2O = a ribonucleoside + phosphate. Its function is as follows. Nucleotidase that shows phosphatase activity on nucleoside 5'-monophosphates. The protein is 5'-nucleotidase SurE of Rubrobacter xylanophilus (strain DSM 9941 / JCM 11954 / NBRC 16129 / PRD-1).